A 130-amino-acid chain; its full sequence is Small ribosomal subunit protein uS8 (130 aa).

The protein belongs to the universal ribosomal protein uS8 family. In terms of assembly, part of the 30S ribosomal subunit.

Functionally, one of the primary rRNA binding proteins, it binds directly to 16S rRNA central domain where it helps coordinate assembly of the platform of the 30S subunit. This chain is Small ribosomal subunit protein uS8, found in Natronomonas pharaonis (strain ATCC 35678 / DSM 2160 / CIP 103997 / JCM 8858 / NBRC 14720 / NCIMB 2260 / Gabara) (Halobacterium pharaonis).